We begin with the raw amino-acid sequence, 1457 residues long: ABC transporter G family member 36 (1457 aa).

The tract at residues 14–43 (RLGGSMRGDSGSMWRRGDDVFSRSSREEDD) is disordered. Positions 28–39 (RRGDDVFSRSSR) are enriched in basic and acidic residues. Residues 164–437 (GNALGILPNR…FESMGFKCPD (274 aa)) form the ABC transporter 1 domain. 197-204 (GPPGSGKT) provides a ligand contact to ATP. The ABC transmembrane type-2 1 domain occupies 515-728 (ELLKANIDRE…AQNAISVNEL (214 aa)). The next 7 helical transmembrane spans lie at 533-553 (FVYM…MTLF), 565-585 (SGGI…FNGF), 621-641 (IPIT…VIGF), 653-673 (LLML…GGAA), 677-697 (IVAN…GGFI), 706-726 (WWIW…ISVN), and 765-785 (IGFG…TLAL). The disordered stretch occupies residues 821 to 841 (SSGSTRRPMGNGTENDSTIVD). The 253-residue stretch at 860-1112 (LSFDNVRYSV…ELIKYFESIP (253 aa)) folds into the ABC transporter 2 domain. 905–912 (GVSGAGKT) contributes to the ATP binding site. The region spanning 1185–1399 (TQCMACLWKQ…TLYGLVVSQF (215 aa)) is the ABC transmembrane type-2 2 domain. 7 helical membrane passes run 1209–1229 (FFFT…LGGK), 1244–1264 (YAAV…VVAV), 1292–1312 (IPYT…MIGF), 1319–1339 (FFWY…YGMM), 1349–1369 (IASI…GFVI), 1380–1400 (WYCW…SQFG), and 1429–1449 (WVAT…GFAI).

This sequence belongs to the ABC transporter superfamily. ABCG family. PDR (TC 3.A.1.205) subfamily.

Its subcellular location is the membrane. May be a general defense protein. This chain is ABC transporter G family member 36, found in Oryza sativa subsp. japonica (Rice).